We begin with the raw amino-acid sequence, 255 residues long: Probable transcriptional regulatory protein Rcas_0718 (255 aa).

Belongs to the TACO1 family.

The protein localises to the cytoplasm. This chain is Probable transcriptional regulatory protein Rcas_0718, found in Roseiflexus castenholzii (strain DSM 13941 / HLO8).